Consider the following 359-residue polypeptide: MKFTAACILLSATAASAFSPVARFTFSRPTTTSLHAEVTTALIKELREATGAGMMDCKKALTEFDGDIEAAADELRKKGLAKADKKASRIAAEGKIAVASAGGKTVLVEVNCETDFVAKDESFAKFADEAAAAAAAMDGDSVEALMAANGNALEDARAGLVSKIGENIQVRRVATRGSGATTTGAYVHMNRIGVLVEIEGGTEALCTDVAMHVAAMNPAYATQEDVPAADIEKERAFLTAQVEDSGKPADIVAKMVEGRLQKFLAENCLVSQTYVKTNDRTVAKLLEENGAKMIGFTRIAVGEGIEKKVDDFAAEVAAMAGGGKAAPAPKAEEPAAVAPAKADAEDSAEAHKLSVITYP.

Residues 323-341 are compositionally biased toward low complexity; the sequence is GKAAPAPKAEEPAAVAPAK. A disordered region spans residues 323 to 345; it reads GKAAPAPKAEEPAAVAPAKADAE.

The protein belongs to the EF-Ts family.

The protein localises to the mitochondrion. Functionally, associates with the EF-Tu.GDP complex and induces the exchange of GDP to GTP. It remains bound to the aminoacyl-tRNA.EF-Tu.GTP complex up to the GTP hydrolysis stage on the ribosome. This is Elongation factor Ts 1, mitochondrial from Thalassiosira pseudonana (Marine diatom).